The following is a 98-amino-acid chain: Integration host factor subunit alpha (98 aa).

Residues 51–71 are disordered; sequence NFDLRDKNERPGRNPKTGEDI. Residues 53 to 69 are compositionally biased toward basic and acidic residues; it reads DLRDKNERPGRNPKTGE.

Belongs to the bacterial histone-like protein family. In terms of assembly, heterodimer of an alpha and a beta chain.

This protein is one of the two subunits of integration host factor, a specific DNA-binding protein that functions in genetic recombination as well as in transcriptional and translational control. The protein is Integration host factor subunit alpha of Vibrio parahaemolyticus serotype O3:K6 (strain RIMD 2210633).